The primary structure comprises 525 residues: GMP synthase [glutamine-hydrolyzing] (525 aa).

The 199-residue stretch at 9–207 (RILILDFGSQ…VRDICQCEAL (199 aa)) folds into the Glutamine amidotransferase type-1 domain. Cysteine 86 serves as the catalytic Nucleophile. Active-site residues include histidine 181 and glutamate 183. In terms of domain architecture, GMPS ATP-PPase spans 208-400 (WTPAKIIDDA…LGLPYDMLYR (193 aa)). 235 to 241 (SGGVDSS) provides a ligand contact to ATP.

Homodimer.

The enzyme catalyses XMP + L-glutamine + ATP + H2O = GMP + L-glutamate + AMP + diphosphate + 2 H(+). Its pathway is purine metabolism; GMP biosynthesis; GMP from XMP (L-Gln route): step 1/1. Its function is as follows. Catalyzes the synthesis of GMP from XMP. The sequence is that of GMP synthase [glutamine-hydrolyzing] from Escherichia fergusonii (strain ATCC 35469 / DSM 13698 / CCUG 18766 / IAM 14443 / JCM 21226 / LMG 7866 / NBRC 102419 / NCTC 12128 / CDC 0568-73).